Here is a 329-residue protein sequence, read N- to C-terminus: GTP 3',8-cyclase (329 aa).

The 227-residue stretch at 8–234 folds into the Radical SAM core domain; it reads AFARKFYYLR…QLRQRSDGPA (227 aa). R17 lines the GTP pocket. Residues C24 and C28 each contribute to the [4Fe-4S] cluster site. Residue Y30 coordinates S-adenosyl-L-methionine. Residue C31 coordinates [4Fe-4S] cluster. GTP is bound at residue R68. G72 provides a ligand contact to S-adenosyl-L-methionine. Position 99 (T99) interacts with GTP. S123 lines the S-adenosyl-L-methionine pocket. K160 is a binding site for GTP. M194 contacts S-adenosyl-L-methionine. [4Fe-4S] cluster-binding residues include C257 and C260. Residue 262 to 264 coordinates GTP; that stretch reads RLR. C274 contacts [4Fe-4S] cluster.

This sequence belongs to the radical SAM superfamily. MoaA family. As to quaternary structure, monomer and homodimer. It depends on [4Fe-4S] cluster as a cofactor.

The catalysed reaction is GTP + AH2 + S-adenosyl-L-methionine = (8S)-3',8-cyclo-7,8-dihydroguanosine 5'-triphosphate + 5'-deoxyadenosine + L-methionine + A + H(+). Its pathway is cofactor biosynthesis; molybdopterin biosynthesis. In terms of biological role, catalyzes the cyclization of GTP to (8S)-3',8-cyclo-7,8-dihydroguanosine 5'-triphosphate. The sequence is that of GTP 3',8-cyclase from Escherichia coli O7:K1 (strain IAI39 / ExPEC).